A 65-amino-acid polypeptide reads, in one-letter code: MKCIQIEMSFTDEYGQVTRLNKTYKPSIIEEHKGEIPRLLLDDFKRFLSSLGFNEKQVSRIVTED.

The protein is SPbeta prophage-derived uncharacterized protein YorO (yorO) of Bacillus subtilis (strain 168).